The following is a 342-amino-acid chain: Signal-regulatory protein beta-2 (342 aa).

An N-terminal signal peptide occupies residues 1–32 (MCSTMSAPTCLAHLPPCFLLLALVLVPSDASG). 2 Ig-like V-type domains span residues 33–143 (QSSR…KSDE) and 157–258 (PDLW…SGQG). Topologically, residues 33–287 (QSSRNDWQVL…EPATEMSPTG (255 aa)) are extracellular. C60 and C127 form a disulfide bridge. N116, N179, and N231 each carry an N-linked (GlcNAc...) asparagine glycan. Cysteines 180 and 242 form a disulfide. The helical transmembrane segment at 288-308 (LLVVFAPVVLGLKAITLAALL) threads the bilayer. The Cytoplasmic segment spans residues 309 to 342 (LALATSRRSPGQEDVKTTGPAGAMNTLAWSKGQE). The segment at 317-342 (SPGQEDVKTTGPAGAMNTLAWSKGQE) is disordered.

It is found in the membrane. This is Signal-regulatory protein beta-2 (SIRPB2) from Homo sapiens (Human).